Consider the following 318-residue polypeptide: tRNA(Ile)-lysidine synthase (318 aa).

26–31 contributes to the ATP binding site; it reads SGGADS.

It belongs to the tRNA(Ile)-lysidine synthase family.

It localises to the cytoplasm. It carries out the reaction cytidine(34) in tRNA(Ile2) + L-lysine + ATP = lysidine(34) in tRNA(Ile2) + AMP + diphosphate + H(+). Functionally, ligates lysine onto the cytidine present at position 34 of the AUA codon-specific tRNA(Ile) that contains the anticodon CAU, in an ATP-dependent manner. Cytidine is converted to lysidine, thus changing the amino acid specificity of the tRNA from methionine to isoleucine. This Nocardia farcinica (strain IFM 10152) protein is tRNA(Ile)-lysidine synthase.